Consider the following 659-residue polypeptide: MFKPEKIVKIEVITLTRFRDTLLTYLHEIGVAQLEEVPIKEVQRDTPNEFYRKATSYSITLSRLVDTLKQYLPPKKGGFKEFMFPQEKPKKKYKYKGIEALIKDVETFLERVEPEIRSLESEVSRINNEISSLEDTLESLQILSNLNVEVEYLRGGSFLNVDVGLVDREKAEPLIKEISDVVEGRVHIVRKDIGARTLLVVVSLREDSSKVSSVLAKYGFEKIEVPEGKGLPRDLIPIYTEKIKEKEKELEEVKSRGRKVAERYYDELVFYKELMDNEREKGNYLSYLVRTEMTFGLLAWVPEKDVEKVVEGIKKITGGVAYINISEPSKEEIDNVPVKLKNPEFLSHFEMLTEMYGVPKYNEIDPTPIMAFTYSFFFGFMLTDFVYGLLLGIISALLVKGHSKLKDGTWKFAKIMLWSSVFTMTLGILFGSYCGNALDMAGIKVPRILDPMEQALTVLMIALAIGLAHLFTGYLLGFIVRWKNGDKKGAIFEQLSWLLIIIGITLFALSSRLGVPDLIVKGIFGIGLILFMIGEVLANKGMAVLLVISDFFGFVGNWLSYARLMALALATSGIALVINILVEMIWGIKIASVPLGALIGILVLIGGHIFSTAINALGAFVHALRLHYVEFFGTFYSGEGRKFEPFAAKREVSELEIET.

Transmembrane regions (helical) follow at residues 376–396 (FFFG…IISA), 415–435 (IMLW…SYCG), 460–480 (MIAL…GFIV), 489–509 (GAIF…LFAL), 518–538 (LIVK…EVLA), 542–562 (MAVL…LSYA), 568–588 (ALAT…IWGI), and 590–610 (IASV…GHIF).

Belongs to the V-ATPase 116 kDa subunit family. Has multiple subunits with at least A(3), B(3), C, D, E, F, H, I and proteolipid K(x).

Its subcellular location is the cell membrane. Its function is as follows. Component of the A-type ATP synthase that produces ATP from ADP in the presence of a proton gradient across the membrane. This chain is A-type ATP synthase subunit I, found in Pyrococcus horikoshii (strain ATCC 700860 / DSM 12428 / JCM 9974 / NBRC 100139 / OT-3).